The following is a 233-amino-acid chain: 2,3,4,5-tetrahydropyridine-2,6-dicarboxylate N-acetyltransferase (233 aa).

Belongs to the transferase hexapeptide repeat family. DapH subfamily.

The catalysed reaction is (S)-2,3,4,5-tetrahydrodipicolinate + acetyl-CoA + H2O = L-2-acetamido-6-oxoheptanedioate + CoA. Its pathway is amino-acid biosynthesis; L-lysine biosynthesis via DAP pathway; LL-2,6-diaminopimelate from (S)-tetrahydrodipicolinate (acetylase route): step 1/3. Catalyzes the transfer of an acetyl group from acetyl-CoA to tetrahydrodipicolinate. The polypeptide is 2,3,4,5-tetrahydropyridine-2,6-dicarboxylate N-acetyltransferase (Thermotoga petrophila (strain ATCC BAA-488 / DSM 13995 / JCM 10881 / RKU-1)).